Consider the following 366-residue polypeptide: Histidinol-phosphate aminotransferase (366 aa).

Lys228 is subject to N6-(pyridoxal phosphate)lysine.

This sequence belongs to the class-II pyridoxal-phosphate-dependent aminotransferase family. Histidinol-phosphate aminotransferase subfamily. Homodimer. The cofactor is pyridoxal 5'-phosphate.

It catalyses the reaction L-histidinol phosphate + 2-oxoglutarate = 3-(imidazol-4-yl)-2-oxopropyl phosphate + L-glutamate. It functions in the pathway amino-acid biosynthesis; L-histidine biosynthesis; L-histidine from 5-phospho-alpha-D-ribose 1-diphosphate: step 7/9. This Corynebacterium glutamicum (strain ATCC 13032 / DSM 20300 / JCM 1318 / BCRC 11384 / CCUG 27702 / LMG 3730 / NBRC 12168 / NCIMB 10025 / NRRL B-2784 / 534) protein is Histidinol-phosphate aminotransferase.